A 304-amino-acid polypeptide reads, in one-letter code: PTB domain-containing engulfment adapter protein 1 (304 aa).

Threonine 16 carries the post-translational modification Phosphothreonine. One can recognise a PID domain in the interval 21–176 (SKHYIPYNAK…AGMQKRIQDL (156 aa)). A coiled-coil region spans residues 159–200 (DVETRKQIAGMQKRIQDLETENMELKNKVQDLESRLRTTQVS). At serine 223 the chain carries Phosphoserine.

The protein belongs to the ced-6 family. Homodimer. Interacts with clathrin and MEGF10. Interacts with GDP-bound ARF6, but not with GTP-bound ARF6. Part of a complex composed of GULP1, ACAP1 and ARF6. Interacts with ACAP1, LRP1 and STAB2. In terms of tissue distribution, detected throughout the brain, particularly in Purkinje cells, hippocampal and cortical neurons (at protein level).

It localises to the cytoplasm. Its function is as follows. Modulates cellular glycosphingolipid and cholesterol transport. May play a role in the internalization of various LRP1 ligands, such as PSAP. May function as an adapter protein. Required for efficient phagocytosis of apoptotic cells. Increases cellular levels of GTP-bound ARF6. The protein is PTB domain-containing engulfment adapter protein 1 (Gulp1) of Mus musculus (Mouse).